We begin with the raw amino-acid sequence, 243 residues long: Uridine-cytidine kinase B (243 aa).

Residue 22–29 (GGTASGKT) coordinates ATP.

This sequence belongs to the uridine kinase family.

It carries out the reaction uridine + ATP = UMP + ADP + H(+). It catalyses the reaction cytidine + ATP = CMP + ADP + H(+). It participates in pyrimidine metabolism; CTP biosynthesis via salvage pathway; CTP from cytidine: step 1/3. The protein operates within pyrimidine metabolism; UMP biosynthesis via salvage pathway; UMP from uridine: step 1/1. Its function is as follows. Catalyzes the conversion of uridine into uridine monophosphate and cytidine into cytidine monophosphate in the pyrimidine salvage pathway. In Dictyostelium discoideum (Social amoeba), this protein is Uridine-cytidine kinase B (udkB).